Consider the following 338-residue polypeptide: uncharacterized protein (338 aa).

The N-terminal stretch at 1–29 is a signal peptide; it reads MIKQLYKNITICTLALSTTFTVLPATSYA.

It belongs to the aerolysin family.

This is an uncharacterized protein from Staphylococcus aureus (strain MSSA476).